The primary structure comprises 67 residues: uncharacterized protein (67 aa).

This is an uncharacterized protein from Rickettsia prowazekii (strain Madrid E).